A 300-amino-acid polypeptide reads, in one-letter code: Nucleotide-binding protein TM1040_2438 (300 aa).

24-31 contributes to the ATP binding site; it reads GPSGAGRT. Residue 71–74 coordinates GTP; it reads DPRN.

It belongs to the RapZ-like family.

In terms of biological role, displays ATPase and GTPase activities. This chain is Nucleotide-binding protein TM1040_2438, found in Ruegeria sp. (strain TM1040) (Silicibacter sp.).